The following is a 65-amino-acid chain: Large ribosomal subunit protein bL35 (65 aa).

The segment covering 1–15 has biased composition (basic residues); sequence MPKMKTKSSAKKRFS. Residues 1-21 are disordered; the sequence is MPKMKTKSSAKKRFSIRAGGS.

It belongs to the bacterial ribosomal protein bL35 family.

The sequence is that of Large ribosomal subunit protein bL35 from Dechloromonas aromatica (strain RCB).